The primary structure comprises 524 residues: Na(+)/H(+) antiporter NhaB (524 aa).

The next 9 membrane-spanning stretches (helical) occupy residues 13–33 (FLGN…IINP), 98–118 (LLLV…LFVF), 140–160 (AFLS…SVSV), 239–259 (FFIR…LVCL), 304–324 (AIIG…VGLV), 325–345 (GLSV…HSLG), 358–378 (LTVF…TPII), 448–468 (ATPN…APLI), and 479–499 (ALPY…FLLV).

Belongs to the NhaB Na(+)/H(+) (TC 2.A.34) antiporter family.

The protein resides in the cell inner membrane. The catalysed reaction is 2 Na(+)(in) + 3 H(+)(out) = 2 Na(+)(out) + 3 H(+)(in). Its function is as follows. Na(+)/H(+) antiporter that extrudes sodium in exchange for external protons. The protein is Na(+)/H(+) antiporter NhaB of Yersinia pseudotuberculosis serotype O:3 (strain YPIII).